The chain runs to 427 residues: Gamma-glutamyl phosphate reductase (427 aa).

The protein belongs to the gamma-glutamyl phosphate reductase family.

The protein resides in the cytoplasm. It carries out the reaction L-glutamate 5-semialdehyde + phosphate + NADP(+) = L-glutamyl 5-phosphate + NADPH + H(+). It participates in amino-acid biosynthesis; L-proline biosynthesis; L-glutamate 5-semialdehyde from L-glutamate: step 2/2. In terms of biological role, catalyzes the NADPH-dependent reduction of L-glutamate 5-phosphate into L-glutamate 5-semialdehyde and phosphate. The product spontaneously undergoes cyclization to form 1-pyrroline-5-carboxylate. The protein is Gamma-glutamyl phosphate reductase of Gluconobacter oxydans (strain 621H) (Gluconobacter suboxydans).